A 213-amino-acid polypeptide reads, in one-letter code: 3-isopropylmalate dehydratase small subunit (213 aa).

It belongs to the LeuD family. LeuD type 1 subfamily. Heterodimer of LeuC and LeuD.

The enzyme catalyses (2R,3S)-3-isopropylmalate = (2S)-2-isopropylmalate. It functions in the pathway amino-acid biosynthesis; L-leucine biosynthesis; L-leucine from 3-methyl-2-oxobutanoate: step 2/4. Functionally, catalyzes the isomerization between 2-isopropylmalate and 3-isopropylmalate, via the formation of 2-isopropylmaleate. This chain is 3-isopropylmalate dehydratase small subunit, found in Neisseria meningitidis serogroup B (strain ATCC BAA-335 / MC58).